Here is a 158-residue protein sequence, read N- to C-terminus: Putative zinc-binding protein ORF9 (158 aa).

The RING-type; degenerate zinc finger occupies 72–111 (CPVCGRAVVGPTVREACGHVTCNACETEACAVDRLCIGGG). The disordered stretch occupies residues 126 to 158 (GPRWRGPRPTRPEAHEAVQRSRGSSEDACTCAP). Positions 135-150 (TRPEAHEAVQRSRGSS) are enriched in basic and acidic residues.

This Ictalurid herpesvirus 1 (strain Auburn) (IcHV-1) protein is Putative zinc-binding protein ORF9 (ORF9).